Here is a 200-residue protein sequence, read N- to C-terminus: Imidazoleglycerol-phosphate dehydratase (200 aa).

This sequence belongs to the imidazoleglycerol-phosphate dehydratase family.

The protein localises to the cytoplasm. It catalyses the reaction D-erythro-1-(imidazol-4-yl)glycerol 3-phosphate = 3-(imidazol-4-yl)-2-oxopropyl phosphate + H2O. It functions in the pathway amino-acid biosynthesis; L-histidine biosynthesis; L-histidine from 5-phospho-alpha-D-ribose 1-diphosphate: step 6/9. This chain is Imidazoleglycerol-phosphate dehydratase, found in Leifsonia xyli subsp. xyli (strain CTCB07).